Here is a 143-residue protein sequence, read N- to C-terminus: Methylglyoxal synthase (143 aa).

The MGS-like domain occupies 1 to 143 (MTVKKIALVA…DYEAYRNRII (143 aa)). Residues His-11, Lys-15, 37 to 40 (TGST), and 57 to 58 (SG) each bind substrate. The active-site Proton donor/acceptor is the Asp-63. His-90 provides a ligand contact to substrate.

Belongs to the methylglyoxal synthase family.

It catalyses the reaction dihydroxyacetone phosphate = methylglyoxal + phosphate. Catalyzes the formation of methylglyoxal from dihydroxyacetone phosphate. The sequence is that of Methylglyoxal synthase from Coxiella burnetii (strain Dugway 5J108-111).